The chain runs to 31 residues: Alpha-conotoxin Li1.12 (31 aa).

Positions 1–15 are excised as a propeptide; it reads AGNAKMSALMALTIR. 2 disulfide bridges follow: Cys17/Cys23 and Cys18/Cys30. Cysteine amide is present on Cys30.

Belongs to the conotoxin A superfamily. Expressed by the venom duct.

Its subcellular location is the secreted. In terms of biological role, alpha-conotoxins act on postsynaptic membranes, they bind to the nicotinic acetylcholine receptors (nAChR) and thus inhibit them. This toxin inhibits alpha-3-beta-4, alpha-6/alpha-3-beta-4, and alpha-2-beta-4 nAChRs. In Conus lividus (Livid cone), this protein is Alpha-conotoxin Li1.12.